The chain runs to 259 residues: Sugar fermentation stimulation protein homolog (259 aa).

The protein belongs to the SfsA family.

The sequence is that of Sugar fermentation stimulation protein homolog from Chloroflexus aurantiacus (strain ATCC 29364 / DSM 637 / Y-400-fl).